The chain runs to 357 residues: UDP-N-acetylglucosamine--N-acetylmuramyl-(pentapeptide) pyrophosphoryl-undecaprenol N-acetylglucosamine transferase (357 aa).

UDP-N-acetyl-alpha-D-glucosamine-binding positions include Ser-14 to Gly-16, Asn-125, Ser-190, and Gln-290.

The protein belongs to the glycosyltransferase 28 family. MurG subfamily.

It localises to the cell inner membrane. The enzyme catalyses di-trans,octa-cis-undecaprenyl diphospho-N-acetyl-alpha-D-muramoyl-L-alanyl-D-glutamyl-meso-2,6-diaminopimeloyl-D-alanyl-D-alanine + UDP-N-acetyl-alpha-D-glucosamine = di-trans,octa-cis-undecaprenyl diphospho-[N-acetyl-alpha-D-glucosaminyl-(1-&gt;4)]-N-acetyl-alpha-D-muramoyl-L-alanyl-D-glutamyl-meso-2,6-diaminopimeloyl-D-alanyl-D-alanine + UDP + H(+). It participates in cell wall biogenesis; peptidoglycan biosynthesis. In terms of biological role, cell wall formation. Catalyzes the transfer of a GlcNAc subunit on undecaprenyl-pyrophosphoryl-MurNAc-pentapeptide (lipid intermediate I) to form undecaprenyl-pyrophosphoryl-MurNAc-(pentapeptide)GlcNAc (lipid intermediate II). This is UDP-N-acetylglucosamine--N-acetylmuramyl-(pentapeptide) pyrophosphoryl-undecaprenol N-acetylglucosamine transferase from Chlamydia felis (strain Fe/C-56) (Chlamydophila felis).